The sequence spans 114 residues: Large ribosomal subunit protein uL22c (114 aa).

This sequence belongs to the universal ribosomal protein uL22 family. In terms of assembly, part of the 50S ribosomal subunit.

The protein resides in the plastid. It is found in the chloroplast. In terms of biological role, this protein binds specifically to 23S rRNA. Its function is as follows. The globular domain of the protein is located near the polypeptide exit tunnel on the outside of the subunit, while an extended beta-hairpin is found that lines the wall of the exit tunnel in the center of the 70S ribosome. The chain is Large ribosomal subunit protein uL22c (rpl22) from Gracilaria tenuistipitata (Red alga).